Consider the following 46-residue polypeptide: Photosystem II reaction center protein K (46 aa).

Residues 1–9 (MLILLNTFA) constitute a propeptide that is removed on maturation. The helical transmembrane segment at 25–45 (LPLIPLFFFLLVFVWQAAVGF) threads the bilayer.

Belongs to the PsbK family. PSII is composed of 1 copy each of membrane proteins PsbA, PsbB, PsbC, PsbD, PsbE, PsbF, PsbH, PsbI, PsbJ, PsbK, PsbL, PsbM, PsbT, PsbX, PsbY, Psb30/Ycf12, peripheral proteins PsbO, CyanoQ (PsbQ), PsbU, PsbV and a large number of cofactors. It forms dimeric complexes.

The protein resides in the cellular thylakoid membrane. Its function is as follows. One of the components of the core complex of photosystem II (PSII). PSII is a light-driven water:plastoquinone oxidoreductase that uses light energy to abstract electrons from H(2)O, generating O(2) and a proton gradient subsequently used for ATP formation. It consists of a core antenna complex that captures photons, and an electron transfer chain that converts photonic excitation into a charge separation. This chain is Photosystem II reaction center protein K, found in Prochlorococcus marinus (strain MIT 9215).